The primary structure comprises 337 residues: MKTLGEFIVEKQLDFSHATGELTALLSAIKLGAKIIHRDINKAGLVDILGASGVSNIQGEDQMKLDLFANEKLKAALKARGEVAGIASEEEDDIVIFDGGRAENAKYVVLMDPLDGSSNIDVNVSVGTIFSIYRRITPFGTPITEADFLQPGTKQVAAGYVVYGSSTMLVYTTGYGVHTFTYDPSLGVFCLSGEKVRYPATGCMYSINEGNYIKFPLGVKKYIKYCQEQDEATQRPYTSRYIGSLVADFHRNLLKGGIYIYPSTASHPQGKLRLLYECNPMAFLAEQAGGKATDGVNRILDIVPEKLHQRAPFFVGTKSMVEDAEGFIAKFPDEEAK.

Mg(2+) is bound by residues Glu-89, Asp-112, Leu-114, and Asp-115. Residues 115–118 (DGSS), Asn-208, Tyr-241, and Lys-271 contribute to the substrate site. Glu-277 lines the Mg(2+) pocket.

The protein belongs to the FBPase class 1 family. In terms of assembly, homotetramer. The cofactor is Mg(2+).

The protein localises to the cytoplasm. The enzyme catalyses beta-D-fructose 1,6-bisphosphate + H2O = beta-D-fructose 6-phosphate + phosphate. It functions in the pathway carbohydrate biosynthesis; gluconeogenesis. This Yersinia enterocolitica serotype O:8 / biotype 1B (strain NCTC 13174 / 8081) protein is Fructose-1,6-bisphosphatase class 1.